Consider the following 479-residue polypeptide: Deoxyribodipyrimidine photo-lyase (479 aa).

The Photolyase/cryptochrome alpha/beta domain maps to 6–137 (SLKAVWFRRD…PFYTFEDAYL (132 aa)). An FAD-binding site is contributed by tyrosine 229. Arginine 233 serves as a coordination point for DNA. FAD is bound by residues 241–245 (TSRLS) and 278–285 (ELAWRDFY). Interaction with DNA regions lie at residues 278–285 (ELAWRDFY) and 344–345 (NR). Residue 375-377 (DYD) participates in FAD binding. Glutamine 407 lines the DNA pocket.

It belongs to the DNA photolyase class-1 family. In terms of assembly, monomer. FAD serves as cofactor. The cofactor is (6R)-5,10-methylene-5,6,7,8-tetrahydrofolate.

It catalyses the reaction cyclobutadipyrimidine (in DNA) = 2 pyrimidine residues (in DNA).. Its function is as follows. Involved in repair of UV radiation-induced DNA damage. Catalyzes the light-dependent monomerization (300-600 nm) of cyclobutyl pyrimidine dimers (in cis-syn configuration), which are formed between adjacent bases on the same DNA strand upon exposure to ultraviolet radiation. The sequence is that of Deoxyribodipyrimidine photo-lyase (phr) from Alkalihalophilus pseudofirmus (strain ATCC BAA-2126 / JCM 17055 / OF4) (Bacillus pseudofirmus).